Reading from the N-terminus, the 141-residue chain is Hemoglobin subunit alpha-A (141 aa).

The region spanning 1 to 141 is the Globin domain; sequence VLSGSDKTNV…VGNVLTAKYR (141 aa). H58 is an O2 binding site. H87 provides a ligand contact to heme b.

The protein belongs to the globin family. As to quaternary structure, heterotetramer of two alpha chains and two beta chains. As to expression, red blood cells.

Its function is as follows. Involved in oxygen transport from the lung to the various peripheral tissues. The sequence is that of Hemoglobin subunit alpha-A (HBAA) from Chroicocephalus ridibundus (Black-headed gull).